The chain runs to 537 residues: Tyrosine-protein kinase Fyn (537 aa).

A lipid anchor (N-myristoyl glycine) is attached at Gly-2. S-palmitoyl cysteine attachment occurs at residues Cys-3 and Cys-6. The residue at position 12 (Thr-12) is a Phosphothreonine; by PKC. The SH3 domain occupies Thr-82 to Ser-143. Residues Trp-149–Cys-246 form the SH2 domain. Residues Leu-271–Phe-524 enclose the Protein kinase domain. ATP contacts are provided by residues Leu-277 to Val-285 and Lys-299. Residue Asp-390 is the Proton acceptor of the active site. Position 420 is a phosphotyrosine; by autocatalysis (Tyr-420). A Phosphotyrosine modification is found at Tyr-531.

The protein belongs to the protein kinase superfamily. Tyr protein kinase family. SRC subfamily. In terms of assembly, associates through its SH3 domain, to the p85 subunit of phosphatidylinositol 3-kinase. Mn(2+) serves as cofactor.

It catalyses the reaction L-tyrosyl-[protein] + ATP = O-phospho-L-tyrosyl-[protein] + ADP + H(+). Inhibited by phosphorylation of Tyr-531 by leukocyte common antigen and activated by dephosphorylation of this site. Its function is as follows. Tyrosine-protein kinase implicated in the control of cell growth. Plays a role in the regulation of intracellular calcium levels. Required in brain development and mature brain function with important roles in the regulation of axon growth, axon guidance, and neurite extension. Blocks axon outgrowth and attraction induced by ntn1 by phosphorylating its receptor ddc. The polypeptide is Tyrosine-protein kinase Fyn (fyn) (Xenopus laevis (African clawed frog)).